The sequence spans 203 residues: 3-isopropylmalate dehydratase small subunit (203 aa).

It belongs to the LeuD family. LeuD type 1 subfamily. In terms of assembly, heterodimer of LeuC and LeuD.

The enzyme catalyses (2R,3S)-3-isopropylmalate = (2S)-2-isopropylmalate. Its pathway is amino-acid biosynthesis; L-leucine biosynthesis; L-leucine from 3-methyl-2-oxobutanoate: step 2/4. Catalyzes the isomerization between 2-isopropylmalate and 3-isopropylmalate, via the formation of 2-isopropylmaleate. The protein is 3-isopropylmalate dehydratase small subunit of Rhodospirillum centenum (strain ATCC 51521 / SW).